An 80-amino-acid polypeptide reads, in one-letter code: Defensin-like protein 16 (80 aa).

The signal sequence occupies residues 1-29; the sequence is MAKFASIITLIFAALVLFAAFDAPAMVEA. Q30 carries the pyrrolidone carboxylic acid modification. 4 disulfides stabilise this stretch: C33–C80, C44–C65, C50–C74, and C54–C76.

This sequence belongs to the DEFL family. Predominantly expressed in leaves.

It localises to the secreted. Its function is as follows. Confers broad-spectrum resistance to pathogens. Has antifungal activity in vitro. The chain is Defensin-like protein 16 (PDF1.2A) from Arabidopsis thaliana (Mouse-ear cress).